Consider the following 198-residue polypeptide: Probable chemoreceptor glutamine deamidase CheD (198 aa).

Belongs to the CheD family.

The enzyme catalyses L-glutaminyl-[protein] + H2O = L-glutamyl-[protein] + NH4(+). Probably deamidates glutamine residues to glutamate on methyl-accepting chemotaxis receptors (MCPs), playing an important role in chemotaxis. The sequence is that of Probable chemoreceptor glutamine deamidase CheD from Xanthomonas euvesicatoria pv. vesicatoria (strain 85-10) (Xanthomonas campestris pv. vesicatoria).